Consider the following 346-residue polypeptide: Probable aldo-keto reductase 2 (346 aa).

The active-site Proton donor is Tyr-63. Residue His-131 coordinates substrate. Position 210–220 (210–220) interacts with NADP(+); it reads SPLGRGFLAAG.

The protein belongs to the aldo/keto reductase family. Aldo/keto reductase 13 subfamily.

The sequence is that of Probable aldo-keto reductase 2 (AGD2) from Arabidopsis thaliana (Mouse-ear cress).